A 274-amino-acid polypeptide reads, in one-letter code: Nitrogenase iron protein (274 aa).

8–15 (GKGGIGKS) lines the ATP pocket. A [4Fe-4S] cluster-binding site is contributed by cysteine 94. Arginine 97 is modified (ADP-ribosylarginine; by dinitrogenase reductase ADP-ribosyltransferase). Cysteine 131 contacts [4Fe-4S] cluster.

The protein belongs to the NifH/BchL/ChlL family. Homodimer. The cofactor is [4Fe-4S] cluster. The reversible ADP-ribosylation of Arg-97 inactivates the nitrogenase reductase and regulates nitrogenase activity.

The enzyme catalyses N2 + 8 reduced [2Fe-2S]-[ferredoxin] + 16 ATP + 16 H2O = H2 + 8 oxidized [2Fe-2S]-[ferredoxin] + 2 NH4(+) + 16 ADP + 16 phosphate + 6 H(+). Functionally, the key enzymatic reactions in nitrogen fixation are catalyzed by the nitrogenase complex, which has 2 components: the iron protein and the molybdenum-iron protein. The sequence is that of Nitrogenase iron protein from Chlorobium phaeobacteroides (strain DSM 266 / SMG 266 / 2430).